The following is a 285-amino-acid chain: Putative quercetin 2,3-dioxygenase PA3240 (285 aa).

Histidine 60, histidine 62, histidine 104, and glutamate 106 together coordinate a divalent metal cation.

It belongs to the pirin family. It depends on a divalent metal cation as a cofactor.

The enzyme catalyses quercetin + O2 = 2-(3,4-dihydroxybenzoyloxy)-4,6-dihydroxybenzoate + CO. It functions in the pathway flavonoid metabolism; quercetin degradation. In terms of biological role, putative quercetin 2,3-dioxygenase. The protein is Putative quercetin 2,3-dioxygenase PA3240 of Pseudomonas aeruginosa (strain ATCC 15692 / DSM 22644 / CIP 104116 / JCM 14847 / LMG 12228 / 1C / PRS 101 / PAO1).